The following is a 197-amino-acid chain: TLE family member 5 (197 aa).

A CCN domain region spans residues 166–197 (LSALGSQAHLSKEDKNGHDGDTHQEDDGEKSD). The disordered stretch occupies residues 174-197 (HLSKEDKNGHDGDTHQEDDGEKSD). The span at 175-197 (LSKEDKNGHDGDTHQEDDGEKSD) shows a compositional bias: basic and acidic residues. A Phosphoserine modification is found at Ser-196.

This sequence belongs to the WD repeat Groucho/TLE family. Homooligomer and heterooligomer with other family members. Binds TCF7. Binds the NF-kappa-B subunit RELA. Interacts with PHF12. Interacts (via Q domain) with SIX3. Interacts with SIX6. Post-translationally, ubiquitinated by XIAP/BIRC4. As to expression, found predominantly in muscle, heart and Placenta. In fetal tissues, abundantly expressed in the heart, lung, kidney, brain and liver.

The protein resides in the nucleus. Transcriptional corepressor. Acts as a dominant repressor towards other family members. Inhibits NF-kappa-B-regulated gene expression. May be required for the initiation and maintenance of the differentiated state. Essential for the transcriptional repressor activity of SIX3 during retina and lens development. The protein is TLE family member 5 of Homo sapiens (Human).